We begin with the raw amino-acid sequence, 745 residues long: Phosphoribosylformylglycinamidine synthase subunit PurL (745 aa).

The active site involves His-50. ATP-binding residues include Tyr-53 and Lys-92. Glu-94 lines the Mg(2+) pocket. Residues 95-98 and Arg-117 each bind substrate; that span reads SHNH. The active-site Proton acceptor is the His-96. Residue Asp-118 coordinates Mg(2+). Residue Gln-241 participates in substrate binding. Asp-269 provides a ligand contact to Mg(2+). 313 to 315 contacts substrate; sequence ESQ. 2 residues coordinate ATP: Asp-495 and Gly-532. Asn-533 contributes to the Mg(2+) binding site. Ser-535 contributes to the substrate binding site.

The protein belongs to the FGAMS family. As to quaternary structure, monomer. Part of the FGAM synthase complex composed of 1 PurL, 1 PurQ and 2 PurS subunits.

Its subcellular location is the cytoplasm. It carries out the reaction N(2)-formyl-N(1)-(5-phospho-beta-D-ribosyl)glycinamide + L-glutamine + ATP + H2O = 2-formamido-N(1)-(5-O-phospho-beta-D-ribosyl)acetamidine + L-glutamate + ADP + phosphate + H(+). The protein operates within purine metabolism; IMP biosynthesis via de novo pathway; 5-amino-1-(5-phospho-D-ribosyl)imidazole from N(2)-formyl-N(1)-(5-phospho-D-ribosyl)glycinamide: step 1/2. In terms of biological role, part of the phosphoribosylformylglycinamidine synthase complex involved in the purines biosynthetic pathway. Catalyzes the ATP-dependent conversion of formylglycinamide ribonucleotide (FGAR) and glutamine to yield formylglycinamidine ribonucleotide (FGAM) and glutamate. The FGAM synthase complex is composed of three subunits. PurQ produces an ammonia molecule by converting glutamine to glutamate. PurL transfers the ammonia molecule to FGAR to form FGAM in an ATP-dependent manner. PurS interacts with PurQ and PurL and is thought to assist in the transfer of the ammonia molecule from PurQ to PurL. The protein is Phosphoribosylformylglycinamidine synthase subunit PurL of Allorhizobium ampelinum (strain ATCC BAA-846 / DSM 112012 / S4) (Agrobacterium vitis (strain S4)).